Here is an 87-residue protein sequence, read N- to C-terminus: Large ribosomal subunit protein eL31 (87 aa).

This sequence belongs to the eukaryotic ribosomal protein eL31 family.

The protein is Large ribosomal subunit protein eL31 of Methanocorpusculum labreanum (strain ATCC 43576 / DSM 4855 / Z).